Consider the following 296-residue polypeptide: MAMVQPKSQKWRLLATHLLMFTFIAMILFPLLMVITISLRPGNFATGSLIPENISWEHWKLALGYSVVSPDGRVTPPPFPVMLWLWNSVKVAFITAVGIVTLSTTCAYAFARMHFRGKSTLLKGMLIFQMFPAVLSLVALYALFDRLGEYVPFIGLNTHGGVIFAYLGGIALHVWTIKGYFETIDGSLEEAAALDGATPWQAFRMVLLPLSVPILAVVFILSFIGVITEVPVASLLLRDVNNYTLAVGMQQYLNPQNYLWGDFAAAAVLSALPITIVFLVAQRWLVSGLTAGGVKG.

Topologically, residues 1-12 are cytoplasmic; the sequence is MAMVQPKSQKWR. The chain crosses the membrane as a helical span at residues 13-35; sequence LLATHLLMFTFIAMILFPLLMVI. Topologically, residues 36–88 are periplasmic; it reads TISLRPGNFATGSLIPENISWEHWKLALGYSVVSPDGRVTPPPFPVMLWLWNS. In terms of domain architecture, ABC transmembrane type-1 spans 85–281; sequence LWNSVKVAFI…LPITIVFLVA (197 aa). A helical membrane pass occupies residues 89 to 111; the sequence is VKVAFITAVGIVTLSTTCAYAFA. At 112 to 123 the chain is on the cytoplasmic side; it reads RMHFRGKSTLLK. A helical transmembrane segment spans residues 124–143; sequence GMLIFQMFPAVLSLVALYAL. Residues 144-152 are Periplasmic-facing; sequence FDRLGEYVP. Residues 153–175 form a helical membrane-spanning segment; sequence FIGLNTHGGVIFAYLGGIALHVW. At 176–205 the chain is on the cytoplasmic side; it reads TIKGYFETIDGSLEEAAALDGATPWQAFRM. Residues 206–228 form a helical membrane-spanning segment; the sequence is VLLPLSVPILAVVFILSFIGVIT. The Periplasmic portion of the chain corresponds to 229-257; sequence EVPVASLLLRDVNNYTLAVGMQQYLNPQN. A helical transmembrane segment spans residues 258–280; it reads YLWGDFAAAAVLSALPITIVFLV. The Cytoplasmic segment spans residues 281–296; the sequence is AQRWLVSGLTAGGVKG.

Belongs to the binding-protein-dependent transport system permease family. MalFG subfamily. In terms of assembly, the complex is composed of two ATP-binding proteins (MalK), two transmembrane proteins (MalG and MalF) and a solute-binding protein (MalE).

The protein resides in the cell inner membrane. Part of the ABC transporter complex MalEFGK involved in maltose/maltodextrin import. Probably responsible for the translocation of the substrate across the membrane. The protein is Maltose/maltodextrin transport system permease protein MalG (malG) of Photorhabdus laumondii subsp. laumondii (strain DSM 15139 / CIP 105565 / TT01) (Photorhabdus luminescens subsp. laumondii).